A 658-amino-acid chain; its full sequence is DNA ligase (658 aa).

Residues 31–35 (DFEYD), 80–81 (SL), and E110 each bind NAD(+). Catalysis depends on K112, which acts as the N6-AMP-lysine intermediate. NAD(+) contacts are provided by R133, E167, K279, and K303. Zn(2+) contacts are provided by C397, C400, C415, and C420. Residues 584 to 654 (DTASIYFQKS…KALNIPIINE (71 aa)) form the BRCT domain.

This sequence belongs to the NAD-dependent DNA ligase family. LigA subfamily. Mg(2+) serves as cofactor. It depends on Mn(2+) as a cofactor.

The catalysed reaction is NAD(+) + (deoxyribonucleotide)n-3'-hydroxyl + 5'-phospho-(deoxyribonucleotide)m = (deoxyribonucleotide)n+m + AMP + beta-nicotinamide D-nucleotide.. DNA ligase that catalyzes the formation of phosphodiester linkages between 5'-phosphoryl and 3'-hydroxyl groups in double-stranded DNA using NAD as a coenzyme and as the energy source for the reaction. It is essential for DNA replication and repair of damaged DNA. The protein is DNA ligase of Mycoplasma pneumoniae (strain ATCC 29342 / M129 / Subtype 1) (Mycoplasmoides pneumoniae).